The following is a 37-amino-acid chain: Large ribosomal subunit protein bL36 (37 aa).

It belongs to the bacterial ribosomal protein bL36 family.

The protein is Large ribosomal subunit protein bL36 of Pelotomaculum thermopropionicum (strain DSM 13744 / JCM 10971 / SI).